The primary structure comprises 265 residues: Expansin-like A2 (265 aa).

The N-terminal stretch at 1-21 is a signal peptide; it reads MLQGFLFLLSVVLLFSSSAAA. Residues 42 to 148 form the Expansin-like EG45 domain; the sequence is SGACAYGSMA…RRVPCDYGNK (107 aa). N-linked (GlcNAc...) asparagine glycans are attached at residues Asn100 and Asn103. In terms of domain architecture, Expansin-like CBD spans 162–244; sequence NYLAIKLLYQ…NWEAGKSYDA (83 aa).

Belongs to the expansin family. Expansin-like A subfamily.

It localises to the secreted. This is Expansin-like A2 (EXLA2) from Arabidopsis thaliana (Mouse-ear cress).